The primary structure comprises 82 residues: Transcription elongation factor 1 homolog (82 aa).

Zn(2+) contacts are provided by Cys-26, Cys-29, Cys-50, and Cys-53.

The protein belongs to the ELOF1 family.

It is found in the nucleus. Functionally, transcription elongation factor implicated in the maintenance of proper chromatin structure in actively transcribed regions. The sequence is that of Transcription elongation factor 1 homolog from Manduca sexta (Tobacco hawkmoth).